The primary structure comprises 222 residues: uncharacterized protein (222 aa).

The disordered stretch occupies residues 142-222 (ARRGGCVHPP…LPDPPSAGHL (81 aa)). Low complexity predominate over residues 160–169 (QSRSISSRRA). Residues 182–196 (PRRRPHRHRTRPQTR) show a composition bias toward basic residues.

This sequence belongs to the Rv1128c/1148c/1588c/1702c/1945/3466 family.

This is an uncharacterized protein from Mycobacterium tuberculosis (strain CDC 1551 / Oshkosh).